Here is a 173-residue protein sequence, read N- to C-terminus: Disulfide bond formation protein B (173 aa).

The Cytoplasmic portion of the chain corresponds to 1–11; sequence MNALQWSFRAQ. Residues 12-28 traverse the membrane as a helical segment; it reads CLTGFLFCTGLLAYAIF. Topologically, residues 29-46 are periplasmic; that stretch reads LQLHQGLEPCPLCIFQRI. Cysteine 38 and cysteine 41 are joined by a disulfide. The helical transmembrane segment at 47-63 threads the bilayer; it reads AFAVLGILFLIAGLYNS. At 64-70 the chain is on the cytoplasmic side; that stretch reads SNVYTRK. A helical transmembrane segment spans residues 71–88; it reads AYGLLIFLTAIIGTGIAG. Over 89-145 the chain is Periplasmic; that stretch reads RHVWVQLMPHNTISSCGSPLSFLSETMGPFEVFRTVLTGTSNCGNIDWRFLGLSMPM. A disulfide bond links cysteine 104 and cysteine 131. Residues 146-164 form a helical membrane-spanning segment; the sequence is WSMFWFVALALLGLLVGFK. At 165–173 the chain is on the cytoplasmic side; it reads AERRKPLFS.

The protein belongs to the DsbB family.

The protein localises to the cell inner membrane. In terms of biological role, required for disulfide bond formation in some periplasmic proteins. Acts by oxidizing the DsbA protein. This is Disulfide bond formation protein B from Xylella fastidiosa (strain Temecula1 / ATCC 700964).